The chain runs to 251 residues: Xylose/arabinose import ATP-binding protein XylG (251 aa).

Positions 5–241 (LEIRDVHKSF…EITEVMTSFA (237 aa)) constitute an ABC transporter domain. 37–44 (GDNGAGKS) is an ATP binding site.

It belongs to the ABC transporter superfamily. As to quaternary structure, the complex is composed of two ATP-binding proteins (XylG), two transmembrane proteins (XylH) and a solute-binding protein (XylF).

Its subcellular location is the cell membrane. It catalyses the reaction D-xylose(out) + ATP + H2O = D-xylose(in) + ADP + phosphate + H(+). The enzyme catalyses L-arabinose(out) + ATP + H2O = L-arabinose(in) + ADP + phosphate + H(+). Functionally, part of the ABC transporter complex XylFGH involved in the uptake of xylose and arabinose. Responsible for energy coupling to the transport system. In Sulfolobus acidocaldarius (strain ATCC 33909 / DSM 639 / JCM 8929 / NBRC 15157 / NCIMB 11770), this protein is Xylose/arabinose import ATP-binding protein XylG.